Reading from the N-terminus, the 340-residue chain is Guanine nucleotide-binding protein G(I)/G(S)/G(T) subunit beta-1 (340 aa).

WD repeat units lie at residues 53–83 (GHLA…IIWD), 95–125 (LRSS…PIYN), 141–170 (GHTG…ALWD), 182–212 (GHTG…KLWD), 224–254 (GHES…RLFD), 268–298 (NIIC…NVWD), and 310–340 (GHDN…KIWN).

Belongs to the WD repeat G protein beta family. G proteins are composed of 3 units, alpha, beta and gamma.

In terms of biological role, guanine nucleotide-binding proteins (G proteins) are involved as a modulator or transducer in various transmembrane signaling systems. The beta and gamma chains are required for the GTPase activity, for replacement of GDP by GTP, and for G protein-effector interaction. The polypeptide is Guanine nucleotide-binding protein G(I)/G(S)/G(T) subunit beta-1 (gnb1) (Xenopus laevis (African clawed frog)).